The chain runs to 330 residues: Ribosomal RNA small subunit methyltransferase C (330 aa).

It belongs to the methyltransferase superfamily. RsmC family. Monomer.

The protein resides in the cytoplasm. The catalysed reaction is guanosine(1207) in 16S rRNA + S-adenosyl-L-methionine = N(2)-methylguanosine(1207) in 16S rRNA + S-adenosyl-L-homocysteine + H(+). In terms of biological role, specifically methylates the guanine in position 1207 of 16S rRNA in the 30S particle. The sequence is that of Ribosomal RNA small subunit methyltransferase C from Haemophilus influenzae (strain PittGG).